A 124-amino-acid polypeptide reads, in one-letter code: Small ribosomal subunit protein uS12 (124 aa).

3-methylthioaspartic acid is present on Asp89.

It belongs to the universal ribosomal protein uS12 family. As to quaternary structure, part of the 30S ribosomal subunit. Contacts proteins S8 and S17. May interact with IF1 in the 30S initiation complex.

Functionally, with S4 and S5 plays an important role in translational accuracy. In terms of biological role, interacts with and stabilizes bases of the 16S rRNA that are involved in tRNA selection in the A site and with the mRNA backbone. Located at the interface of the 30S and 50S subunits, it traverses the body of the 30S subunit contacting proteins on the other side and probably holding the rRNA structure together. The combined cluster of proteins S8, S12 and S17 appears to hold together the shoulder and platform of the 30S subunit. The polypeptide is Small ribosomal subunit protein uS12 (Thermoanaerobacter pseudethanolicus (strain ATCC 33223 / 39E) (Clostridium thermohydrosulfuricum)).